We begin with the raw amino-acid sequence, 345 residues long: WD40 repeat protein poxJ (345 aa).

WD repeat units lie at residues 15-49 (ANPP…YDVS), 59-100 (LFNF…EAQQ), 101-146 (VAAH…PLAT), and 250-284 (VNDV…RLKS).

This sequence belongs to the WD repeat rae1 family.

Its pathway is secondary metabolite biosynthesis. In terms of biological role, WD40 repeat protein; part of the gene cluster that mediates the biosynthesis of oxaleimides, cytotoxic compounds containing an unusual disubstituted succinimide moiety. The first step of the pathway is provided by the HR-PKS poxF that serves in a new mode of collaborative biosynthesis with the PKS-NRPS poxE, by providing the olefin containing amino acid substrate via the synthesis of an ACP-bound dec-4-enoate. The cytochrome P450 monooxygenase poxM-catalyzed oxidation at the alpha-position creates the enzyme-bound 2-hydroxydec-4-enoyl-ACP thioester, which may be prone to spontaneous hydrolysis to yield 2-hydroxydec-4-enoic acid due to increased electrophilicity of the carbonyl. 2-hydroxydec-4-enoic acid can then be further oxidized by poxM to yield the alpha-ketoacid 2-oxodec-4-enoicacid, which is reductively aminated by the aminotransferase poxL to yield (S,E)-2-aminodec-4-enoic acid. The Hybrid PKS-NRPS synthetase poxE then performs condensation between the octaketide product of its PKS modules and the amino group of (S,E)-2-aminodec-4-enoic acid which is activated and incorporated by the adenylation domain. The resulting aminoacyl product can be cyclized by the Diels-Alderase PoxQ and reductively released by the reductive (R) domain of poxE to yield an aldehyde intermediate. The released aldehyde is then substrate for a Knoevenagel condensation by the hydrolyase poxO followed by an oxidation at the 5-position of the pyrrolidone ring. The presence of the olefin from the amino acid building block allows for migration of the substituted allyl group to occur. This allylic transposition reaction takes place in a conjugate addition, semipinacol-like fashion to yield a succinimide intermediate. Iterative two-electron oxidations of the C7 methyl of the succinimide intermediate to the carboxylic acid can be catalyzed by one of two remaining cytochrome P450 monooxygenasess poxC or poxD to yield oxaleimide A. Subsequent oxidation yields the maleimide scaffold oxaleimide I. Both oxaleimide A and oxaleimide I can undergo oxidative modifications in the decalin ring to yield the series of products oxaleimides B to H. This Penicillium oxalicum (strain 114-2 / CGMCC 5302) (Penicillium decumbens) protein is WD40 repeat protein poxJ.